The sequence spans 1169 residues: Chromosome partition protein Smc (1169 aa).

32 to 39 (PNGCGKSN) contributes to the ATP binding site. 2 coiled-coil regions span residues 170-265 (ISKY…TGEE) and 307-481 (IRHT…ERLN). The SMC hinge domain occupies 525–620 (DRLGEKIEVA…CASDPAEAAE (96 aa)). 2 coiled-coil regions span residues 656–914 (ALAR…MKLA) and 985–1014 (RYLEEQDRDLTESLATLEQAIEKIDRECRA).

Belongs to the SMC family. As to quaternary structure, homodimer.

The protein localises to the cytoplasm. Functionally, required for chromosome condensation and partitioning. This Methylococcus capsulatus (strain ATCC 33009 / NCIMB 11132 / Bath) protein is Chromosome partition protein Smc.